A 521-amino-acid polypeptide reads, in one-letter code: Cholesterol side-chain cleavage enzyme, mitochondrial (521 aa).

A mitochondrion-targeting transit peptide spans 1–39; sequence MLAKGLPPRSVLVKGCQTFLSAPKERLGHLRVPTSEGAG. Heme is bound at residue Cys-462.

Belongs to the cytochrome P450 family. As to quaternary structure, interacts with FDX1/adrenodoxin. Heme serves as cofactor.

The protein resides in the mitochondrion inner membrane. It carries out the reaction 6 reduced [adrenodoxin] + cholesterol + 3 O2 + 6 H(+) = 4-methylpentanal + pregnenolone + 6 oxidized [adrenodoxin] + 4 H2O. The catalysed reaction is 2 reduced [adrenodoxin] + cholesterol + O2 + 2 H(+) = (22R)-hydroxycholesterol + 2 oxidized [adrenodoxin] + H2O. The enzyme catalyses (22R)-hydroxycholesterol + 2 reduced [adrenodoxin] + O2 + 2 H(+) = (20R,22R)-20,22-dihydroxycholesterol + 2 oxidized [adrenodoxin] + H2O. It catalyses the reaction (20R,22R)-20,22-dihydroxycholesterol + 2 reduced [adrenodoxin] + O2 + 2 H(+) = 4-methylpentanal + pregnenolone + 2 oxidized [adrenodoxin] + 2 H2O. It functions in the pathway lipid metabolism; C21-steroid hormone metabolism. The protein operates within steroid metabolism; cholesterol metabolism. Its function is as follows. A cytochrome P450 monooxygenase that catalyzes the side-chain hydroxylation and cleavage of cholesterol to pregnenolone, the precursor of most steroid hormones. Catalyzes three sequential oxidation reactions of cholesterol, namely the hydroxylation at C22 followed with the hydroxylation at C20 to yield 20R,22R-hydroxycholesterol that is further cleaved between C20 and C22 to yield the C21-steroid pregnenolone and 4-methylpentanal. Mechanistically, uses molecular oxygen inserting one oxygen atom into a substrate and reducing the second into a water molecule. Two electrons are provided by NADPH via a two-protein mitochondrial transfer system comprising flavoprotein FDXR (adrenodoxin/ferredoxin reductase) and nonheme iron-sulfur protein FDX1 or FDX2 (adrenodoxin/ferredoxin). The polypeptide is Cholesterol side-chain cleavage enzyme, mitochondrial (CYP11A1) (Macaca fascicularis (Crab-eating macaque)).